The following is a 309-amino-acid chain: tRNA uridine(34) hydroxylase (309 aa).

Residues serine 130–serine 224 form the Rhodanese domain. Residue cysteine 184 is the Cysteine persulfide intermediate of the active site.

Belongs to the TrhO family.

The catalysed reaction is uridine(34) in tRNA + AH2 + O2 = 5-hydroxyuridine(34) in tRNA + A + H2O. Functionally, catalyzes oxygen-dependent 5-hydroxyuridine (ho5U) modification at position 34 in tRNAs. The sequence is that of tRNA uridine(34) hydroxylase from Rhizobium etli (strain ATCC 51251 / DSM 11541 / JCM 21823 / NBRC 15573 / CFN 42).